We begin with the raw amino-acid sequence, 343 residues long: Apolipoprotein L6 (343 aa).

Residues 1 to 10 (MDNQAERESE) are compositionally biased toward basic and acidic residues. The segment at 1 to 24 (MDNQAERESEAGVGLQRDEDDAPL) is disordered.

It belongs to the apolipoprotein L family. Widely expressed; highly expressed in the uterus, fetal brain and spinal cord, also detected in heart, liver, lung, colon, spleen, thymus, prostate, placenta, adrenal gland, salivary and mammary gland.

The protein resides in the cytoplasm. Its function is as follows. May affect the movement of lipids in the cytoplasm or allow the binding of lipids to organelles. This is Apolipoprotein L6 (APOL6) from Homo sapiens (Human).